The sequence spans 1030 residues: Calcium-transporting ATPase 4, plasma membrane-type (1030 aa).

Over 1 to 157 (MSNLLRDFEV…NRYTEKPARS (157 aa)) the chain is Cytoplasmic. The tract at residues 19 to 30 (ARQRWRSSVSIV) is interaction with calmodulin. The residue at position 28 (Ser-28) is a Phosphoserine. A helical membrane pass occupies residues 158–178 (FLMFVWEALHDITLIILMVCA). Residues 179-196 (VVSIGVGVATEGFPRGMY) lie on the Lumenal side of the membrane. A helical transmembrane segment spans residues 197–217 (DGTGILLSILLVVMVTAISDY). Residues 218 to 345 (KQSLQFRDLD…EDETPLQVKL (128 aa)) are Cytoplasmic-facing. Residues 346–365 (NGVATIIGKIGLSFAVLTFV) traverse the membrane as a helical segment. Residues 366–395 (VLCIRFVLDKATSGSFTNWSSEDALTLLDY) are Lumenal-facing. The helical transmembrane segment at 396 to 413 (FAISVTIIVVAVPEGLPL) threads the bilayer. The Cytoplasmic portion of the chain corresponds to 414-804 (AVTLSLAFAM…RWGRAVYINI (391 aa)). Residue Asp-451 is the 4-aspartylphosphate intermediate of the active site. Mg(2+)-binding residues include Asp-749 and Asp-753. Residues 805–823 (QKFVQFQLTVNVVALIINF) form a helical membrane-spanning segment. Residues 824 to 834 (VSACITGSAPL) are Lumenal-facing. A helical transmembrane segment spans residues 835–855 (TAVQLLWVNMIMDTLGALALA). The Cytoplasmic portion of the chain corresponds to 856 to 875 (TEPPNEGLMKRAPIARTASF). A helical membrane pass occupies residues 876 to 898 (ITKTMWRNIAGQSVYQLIVLGIL). Over 899 to 910 (NFAGKSLLKLDG) the chain is Lumenal. Residues 911–932 (PDSTAVLNTVIFNSFVFCQVFN) traverse the membrane as a helical segment. At 933 to 950 (EINSREIEKINVFKGMFN) the chain is on the cytoplasmic side. The chain crosses the membrane as a helical span at residues 951–972 (SWVFTWVMTVTVVFQVIIVEFL). The Lumenal portion of the chain corresponds to 973-982 (GAFASTVPLS). The helical transmembrane segment at 983–1004 (WQHWLLSILIGSLNMIVAVILK) threads the bilayer. Residues 1005-1030 (CVPVESRHHHDGYDLLPSGPSSSNSA) are Cytoplasmic-facing.

This sequence belongs to the cation transport ATPase (P-type) (TC 3.A.3) family. Type IIB subfamily.

Its subcellular location is the vacuole membrane. The enzyme catalyses Ca(2+)(in) + ATP + H2O = Ca(2+)(out) + ADP + phosphate + H(+). With respect to regulation, activated by calmodulin. Its function is as follows. This magnesium-dependent enzyme catalyzes the hydrolysis of ATP coupled with the translocation of calcium from the cytosol into small vacuoles. The chain is Calcium-transporting ATPase 4, plasma membrane-type (ACA4) from Arabidopsis thaliana (Mouse-ear cress).